The primary structure comprises 81 residues: Small ribosomal subunit protein bS18 (81 aa).

This sequence belongs to the bacterial ribosomal protein bS18 family. In terms of assembly, part of the 30S ribosomal subunit. Forms a tight heterodimer with protein bS6.

Functionally, binds as a heterodimer with protein bS6 to the central domain of the 16S rRNA, where it helps stabilize the platform of the 30S subunit. This chain is Small ribosomal subunit protein bS18, found in Desulfotalea psychrophila (strain LSv54 / DSM 12343).